We begin with the raw amino-acid sequence, 212 residues long: Glycerol-3-phosphate acyltransferase (212 aa).

Helical transmembrane passes span 10–30 (FAAL…AVVV), 90–110 (GYGL…SLGF), 124–144 (FAVS…VAVV), 150–170 (LAAL…GGTI), and 171–191 (WPLN…LFYR).

Belongs to the PlsY family. In terms of assembly, probably interacts with PlsX.

The protein localises to the cell inner membrane. The enzyme catalyses an acyl phosphate + sn-glycerol 3-phosphate = a 1-acyl-sn-glycero-3-phosphate + phosphate. Its pathway is lipid metabolism; phospholipid metabolism. Its function is as follows. Catalyzes the transfer of an acyl group from acyl-phosphate (acyl-PO(4)) to glycerol-3-phosphate (G3P) to form lysophosphatidic acid (LPA). This enzyme utilizes acyl-phosphate as fatty acyl donor, but not acyl-CoA or acyl-ACP. This is Glycerol-3-phosphate acyltransferase from Bordetella avium (strain 197N).